The primary structure comprises 116 residues: Tachykinin-3 (116 aa).

A signal peptide spans 1–20; the sequence is MRSAMLFAAVLALSLAWTFG. Residues 21–79 constitute a propeptide that is removed on maturation; that stretch reads AACEEPQEQGGRLSKDSDLSLLPPPLLRRLYDSRSISLEGLLKVLSKASVGPKETSLPQ. A Methionine amide modification is found at methionine 91. The segment at 92–116 is disordered; sequence GKRNSQPDTPADVVEENTPSFGVLK. A propeptide spanning residues 95–116 is cleaved from the precursor; sequence NSQPDTPADVVEENTPSFGVLK.

This sequence belongs to the tachykinin family.

The protein localises to the secreted. Functionally, tachykinins are active peptides which excite neurons, evoke behavioral responses, are potent vasodilators and secretagogues, and contract (directly or indirectly) many smooth muscles. Is a critical central regulator of gonadal function. The chain is Tachykinin-3 (Tac3) from Rattus norvegicus (Rat).